The sequence spans 246 residues: Ribonuclease PH (246 aa).

Residues R91 and 129 to 131 each bind phosphate; that span reads GTR.

It belongs to the RNase PH family. In terms of assembly, homohexameric ring arranged as a trimer of dimers.

The enzyme catalyses tRNA(n+1) + phosphate = tRNA(n) + a ribonucleoside 5'-diphosphate. Phosphorolytic 3'-5' exoribonuclease that plays an important role in tRNA 3'-end maturation. Removes nucleotide residues following the 3'-CCA terminus of tRNAs; can also add nucleotides to the ends of RNA molecules by using nucleoside diphosphates as substrates, but this may not be physiologically important. Probably plays a role in initiation of 16S rRNA degradation (leading to ribosome degradation) during starvation. This is Ribonuclease PH from Burkholderia cenocepacia (strain ATCC BAA-245 / DSM 16553 / LMG 16656 / NCTC 13227 / J2315 / CF5610) (Burkholderia cepacia (strain J2315)).